Here is a 155-residue protein sequence, read N- to C-terminus: Transcriptional repressor NrdR (155 aa).

Residues 3–34 fold into a zinc finger; it reads CPFCGNVDTQVKDSRPAEDHVSIRRRRFCPAC. The region spanning 49-139 is the ATP-cone domain; the sequence is LVVIKTNGKR…VYKNFQAADD (91 aa).

The protein belongs to the NrdR family. It depends on Zn(2+) as a cofactor.

Negatively regulates transcription of bacterial ribonucleotide reductase nrd genes and operons by binding to NrdR-boxes. The polypeptide is Transcriptional repressor NrdR (Ruegeria sp. (strain TM1040) (Silicibacter sp.)).